The chain runs to 323 residues: tRNA dimethylallyltransferase (323 aa).

16–23 lines the ATP pocket; sequence GPTASGKT. 18-23 contributes to the substrate binding site; that stretch reads TASGKT. Interaction with substrate tRNA regions lie at residues 41-44, 165-169, 253-258, and 286-293; these read DSAL, QRIQR, RCVGYR, and KRQITWLR.

This sequence belongs to the IPP transferase family. As to quaternary structure, monomer. The cofactor is Mg(2+).

The enzyme catalyses adenosine(37) in tRNA + dimethylallyl diphosphate = N(6)-dimethylallyladenosine(37) in tRNA + diphosphate. Catalyzes the transfer of a dimethylallyl group onto the adenine at position 37 in tRNAs that read codons beginning with uridine, leading to the formation of N6-(dimethylallyl)adenosine (i(6)A). This is tRNA dimethylallyltransferase from Ralstonia nicotianae (strain ATCC BAA-1114 / GMI1000) (Ralstonia solanacearum).